The sequence spans 84 residues: Cell division topological specificity factor (84 aa).

It belongs to the MinE family.

Functionally, prevents the cell division inhibition by proteins MinC and MinD at internal division sites while permitting inhibition at polar sites. This ensures cell division at the proper site by restricting the formation of a division septum at the midpoint of the long axis of the cell. In Pseudomonas fluorescens (strain Pf0-1), this protein is Cell division topological specificity factor.